The primary structure comprises 961 residues: MDELGIPVYKRGFPEHLLRGYEFIIDVGTKIESVGGRHDVTKIPEMNAYDIKQESIRTALWYNPIRNDGFVLPRVLDITLRGYDERRAVVESTRHKSFHTNDQWVQWMMKDSMDAQPLKVGLDTQVWNVAHSLHNSVVEIDSKKADTMAYHVEPIEDASKGCLHTRTMMWNHLVRIETFHAAQEVHILFKPTYDIVVHAERRDRSQPFRPGDQTLINFGRGQKVAMNHNSYDKMVEGLTHLVIRGKTPEVIRDDIASLDEICNRWIQSRHDPGEIKAYELCKYLSTIGRKSLDREKEPEDEANLSIRFQEAIDNKFRQHDPERLKIFEHRNQRRDEDRFYILLMIAGSDTFNTRVWWSNPYPCLRRKLIASETKLGDVYSMMRSWYDWSVRPTYAPYEKTREQEKYIYGRVNLFDFVAEPGIKIIHWEYKLNHSTREITYAQGNPCDYYPEDDDVIVTKFDDVAYGQMINEMINGGWNQEQFKMHKILKSEGNVLTIDFEKDAKLTTNEGVTMPEYFNKWIIAPMFNAKLRIKHEEIAQRQSDDPMVKRTLSPIAADPIVLQRLTLARFYDIRPALIGQGLSRQQAQSTYDEEISKQAGYAEILKRRGIVQIPKKPCPTVTAQYTLELYSLSLINILQQHVARDCDEEAIYEHPKADYELEIFGESIVDISQVIVLVFDLIFERRRRVRDVYESRYIITRIRRMRGKERLNVIAEFFPTYGSLLNGLNSAYVVQDIMYLNFLPLYFLAGDNMIYSHRQWSIPLLLYTHEVMVIPLEVGSYNDRCGLIAYLEYMVFFPSKAIRLSKLNEAHAKIAREMLKYYANTTVYDGGDNSNVVTTKQLLYETYLASLCGGFLDGIVWYLPITHPKKCIVAIEVSDERVPASIRAGRIRLRFPLSSRHLKGSAIIQIDLVGRFTVYSEGIVSFLVCKKNLLKYKCEIILLKFSGHVFGNDEMLTKLLNV.

It belongs to the orbivirus VP2 family.

The protein localises to the virion. In terms of biological role, the VP2 protein is one of the two proteins (with VP5) target of the host immunogenic response. Responsible for viral which constitute the virus particle outer capsid. It is the major attachment to target host cell, probably by binding to sialic acid. This attachment induces virion internalization predominantly through clathrin-dependent endocytosis. In Bluetongue virus 1 (isolate South Africa) (BTV 1), this protein is Outer capsid protein VP2 (Segment-2).